Consider the following 110-residue polypeptide: uncharacterized protein (110 aa).

The signal sequence occupies residues 1–23; that stretch reads MKRITINIITMFIAAAVISLTGT.

This is an uncharacterized protein from Bacillus subtilis (strain 168).